Consider the following 432-residue polypeptide: Serine hydroxymethyltransferase (432 aa).

(6S)-5,6,7,8-tetrahydrofolate contacts are provided by residues L131 and 135 to 137 (GHL). Residue K240 is modified to N6-(pyridoxal phosphate)lysine.

Belongs to the SHMT family. As to quaternary structure, homodimer. The cofactor is pyridoxal 5'-phosphate.

Its subcellular location is the cytoplasm. It carries out the reaction (6R)-5,10-methylene-5,6,7,8-tetrahydrofolate + glycine + H2O = (6S)-5,6,7,8-tetrahydrofolate + L-serine. It participates in one-carbon metabolism; tetrahydrofolate interconversion. Its pathway is amino-acid biosynthesis; glycine biosynthesis; glycine from L-serine: step 1/1. Its function is as follows. Catalyzes the reversible interconversion of serine and glycine with tetrahydrofolate (THF) serving as the one-carbon carrier. This reaction serves as the major source of one-carbon groups required for the biosynthesis of purines, thymidylate, methionine, and other important biomolecules. Also exhibits THF-independent aldolase activity toward beta-hydroxyamino acids, producing glycine and aldehydes, via a retro-aldol mechanism. The chain is Serine hydroxymethyltransferase from Acidiphilium cryptum (strain JF-5).